Reading from the N-terminus, the 250-residue chain is MKNLILMIQFFTRIPINIEIDVKEDSFAKGISYLPLVGLIIGGFNAIVYFVSSKFILGTLPIVLALLANTIITGAFHIDGLADTCDGIFSSRKKERMLEIMKDSRVGTNGAIAIVFDFMLRYAVLNSLNKKYIIIALILSPVVAKTVVTLLMCFSVYARKEGGLGGVFVGKVKPFRVIVAFIISISIGYVLIGYKYVALLLITVLFIEIYKKLIYSKIDGMTGDTLGAANEIAEIIFMLALLSFKGCGLL.

6 helical membrane passes run 31-51 (ISYL…VYFV), 55-75 (FILG…ITGA), 106-126 (VGTN…AVLN), 133-153 (IIIA…LLMC), 187-207 (IGYV…VLFI), and 230-250 (NEIA…CGLL).

The protein belongs to the CobS family. It depends on Mg(2+) as a cofactor.

Its subcellular location is the cell membrane. It carries out the reaction alpha-ribazole + adenosylcob(III)inamide-GDP = adenosylcob(III)alamin + GMP + H(+). The enzyme catalyses alpha-ribazole 5'-phosphate + adenosylcob(III)inamide-GDP = adenosylcob(III)alamin 5'-phosphate + GMP + H(+). The protein operates within cofactor biosynthesis; adenosylcobalamin biosynthesis; adenosylcobalamin from cob(II)yrinate a,c-diamide: step 7/7. Joins adenosylcobinamide-GDP and alpha-ribazole to generate adenosylcobalamin (Ado-cobalamin). Also synthesizes adenosylcobalamin 5'-phosphate from adenosylcobinamide-GDP and alpha-ribazole 5'-phosphate. In Clostridium novyi (strain NT), this protein is Adenosylcobinamide-GDP ribazoletransferase.